We begin with the raw amino-acid sequence, 503 residues long: Cytochrome P450 3A7 (503 aa).

Cys-442 is a binding site for heme.

The protein belongs to the cytochrome P450 family. Requires heme as cofactor. As to expression, expressed in fetal liver (at protein level).

It is found in the endoplasmic reticulum membrane. Its subcellular location is the microsome membrane. The catalysed reaction is an organic molecule + reduced [NADPH--hemoprotein reductase] + O2 = an alcohol + oxidized [NADPH--hemoprotein reductase] + H2O + H(+). It catalyses the reaction 3beta-hydroxyandrost-5-en-17-one + reduced [NADPH--hemoprotein reductase] + O2 = 3beta,16alpha-dihydroxy-androst-5-en-17-one + oxidized [NADPH--hemoprotein reductase] + H2O + H(+). The enzyme catalyses dehydroepiandrosterone 3-sulfate + reduced [NADPH--hemoprotein reductase] + O2 = 16alpha-hydroxydehydroepiandrosterone 3-sulfate + oxidized [NADPH--hemoprotein reductase] + H2O + H(+). It carries out the reaction testosterone + reduced [NADPH--hemoprotein reductase] + O2 = 6beta,17beta-dihydroxyandrost-4-en-3-one + oxidized [NADPH--hemoprotein reductase] + H2O + H(+). The catalysed reaction is estrone + reduced [NADPH--hemoprotein reductase] + O2 = 2-hydroxyestrone + oxidized [NADPH--hemoprotein reductase] + H2O + H(+). It catalyses the reaction estrone + reduced [NADPH--hemoprotein reductase] + O2 = 4-hydroxyestrone + oxidized [NADPH--hemoprotein reductase] + H2O + H(+). The enzyme catalyses estrone + reduced [NADPH--hemoprotein reductase] + O2 = 16alpha-hydroxyestrone + oxidized [NADPH--hemoprotein reductase] + H2O + H(+). It carries out the reaction 17beta-estradiol + reduced [NADPH--hemoprotein reductase] + O2 = 2-hydroxy-17beta-estradiol + oxidized [NADPH--hemoprotein reductase] + H2O + H(+). The catalysed reaction is 17beta-estradiol + reduced [NADPH--hemoprotein reductase] + O2 = 6beta-hydroxyestradiol-17beta + oxidized [NADPH--hemoprotein reductase] + H2O + H(+). It catalyses the reaction all-trans-retinoate + reduced [NADPH--hemoprotein reductase] + O2 = all-trans-4-hydroxyretinoate + oxidized [NADPH--hemoprotein reductase] + H2O + H(+). The enzyme catalyses all-trans-retinoate + reduced [NADPH--hemoprotein reductase] + O2 = all-trans-18-hydroxyretinoate + oxidized [NADPH--hemoprotein reductase] + H2O + H(+). Its pathway is steroid hormone biosynthesis. The protein operates within cofactor metabolism; retinol metabolism. Its function is as follows. A cytochrome P450 monooxygenase involved in the metabolism of steroid hormones and vitamins during embryogenesis. Mechanistically, uses molecular oxygen inserting one oxygen atom into a substrate, and reducing the second into a water molecule, with two electrons provided by NADPH via cytochrome P450 reductase (NADPH--hemoprotein reductase). Catalyzes the hydroxylation of carbon-hydrogen bonds. Metabolizes 3beta-hydroxyandrost-5-en-17-one (dehydroepiandrosterone, DHEA), a precursor in the biosynthesis of androgen and estrogen steroid hormones. Exhibits high catalytic activity for the formation of hydroxyestrogens from estrone (E1), particularly D-ring hydroxylated estrone at the C16-alpha position. Mainly hydroxylates all trans-retinoic acid (atRA) to 4-hydroxyretinoate and may play a role in atRA clearance during fetal development. Also involved in the oxidative metabolism of xenobiotics including anticonvulsants. This Homo sapiens (Human) protein is Cytochrome P450 3A7.